A 73-amino-acid chain; its full sequence is Putative antitoxin VapB21 (73 aa).

Belongs to the UPF0330 family.

Functionally, possibly the antitoxin component of a type II toxin-antitoxin (TA) system. Its cognate toxin is VapC21 (Potential). This chain is Putative antitoxin VapB21 (vapB21), found in Sulfurisphaera tokodaii (strain DSM 16993 / JCM 10545 / NBRC 100140 / 7) (Sulfolobus tokodaii).